The chain runs to 297 residues: Light-independent protochlorophyllide reductase iron-sulfur ATP-binding protein (297 aa).

Residues 41 to 46 and Lys70 each bind ATP; that span reads GIGKST. Ser45 contributes to the Mg(2+) binding site. [4Fe-4S] cluster is bound by residues Cys126 and Cys160. Residues 211–212 and 235–237 contribute to the ATP site; these read NR and PDL.

This sequence belongs to the NifH/BchL/ChlL family. As to quaternary structure, homodimer. Protochlorophyllide reductase is composed of three subunits; BchL, BchN and BchB. [4Fe-4S] cluster serves as cofactor.

It catalyses the reaction chlorophyllide a + oxidized 2[4Fe-4S]-[ferredoxin] + 2 ADP + 2 phosphate = protochlorophyllide a + reduced 2[4Fe-4S]-[ferredoxin] + 2 ATP + 2 H2O. It participates in porphyrin-containing compound metabolism; bacteriochlorophyll biosynthesis (light-independent). In terms of biological role, component of the dark-operative protochlorophyllide reductase (DPOR) that uses Mg-ATP and reduced ferredoxin to reduce ring D of protochlorophyllide (Pchlide) to form chlorophyllide a (Chlide). This reaction is light-independent. The L component serves as a unique electron donor to the NB-component of the complex, and binds Mg-ATP. The protein is Light-independent protochlorophyllide reductase iron-sulfur ATP-binding protein of Methylobacterium radiotolerans (strain ATCC 27329 / DSM 1819 / JCM 2831 / NBRC 15690 / NCIMB 10815 / 0-1).